Reading from the N-terminus, the 920-residue chain is MPRRAASPALSENDFDITKSLFNDDIDGNDDDFGNTTTKNVEPLDANGILDLGLESDGDGDGAFISAQQAAANRKASNLKGQSVKKGGGFQAMGLNSHLLKAISRKGFNVPTPIQRKTIPLVLDNQDVVGMARTGSGKTAAFVIPMIEKLRAHSVRVGARALIMSPSRELALQTLKVVKEFGRGTDLKCVLLVGGDSLEEQFGFMAANPDIVIATPGRFLHLKVEMSLDLSSMKYVVFDEADRLFEMGFAAQLGEILHALPISRQTLLFSATLPKSLVEFARAGLQEPSLVRLDAESKVSPDLQSAFFSVKGAEKEGALLHILQDLVKMPTGLPENALNATDNFSKKRKRGPDGPTKKLKPTEHSTIIFAATKHHVDYLASLLRMSGFAVSHAYGSLDQTARNIQVEDFRTGKSNILVVTDVAARGIDIPVLANVINYDFPPQPKVFVHRVGRTARAGQRGWSYSLVRDTDAPYLLDLQLFLGRRLLLGRDCGDSPNYAEDVIVGALQRNEVESKSEWITKLLYDDDDLTALRNVAGKGEKLYVKTRNSASSESAKRAKEVVASKGWMELHPLFKDVTNGAEQARLEMLAKISGFRPNETVFEIGQKGKAAHSEAAEIMRHRREKIIPRRQKEEDEKAAAAAAAAEEDNFDSPAEENDDNDDLEVTVTGGDDDMAEASDGELEVTFSKAAQKGKGRTLSWKDSENFMSYTPKTINTAEERGYGVHSGSYNTASQNSNFVEAARGVTMDLTNDDGAKSFAEPSKAKGMRWDKKNSKYVARANDEDGSKGIKYIRGESGQKIAASFQSGRFDRWRKAHKVDRMPRTGEAEREGPASAGGVGRGFGTRYKHKQERAPKEADKYRDDYHVRKKRVAEAKENRVGSFKDGSGKSEIKSTEDIRKDRKLQERRKAKNARPSKKGKY.

The Q motif signature appears at 88–116 (GGFQAMGLNSHLLKAISRKGFNVPTPIQR). Residues 119 to 291 (IPLVLDNQDV…RAGLQEPSLV (173 aa)) enclose the Helicase ATP-binding domain. An ATP-binding site is contributed by 132–139 (ARTGSGKT). The short motif at 239–242 (DEAD) is the DEAD box element. Disordered regions lie at residues 337–361 (ALNA…KLKP), 623–668 (REKI…VTVT), 749–770 (LTND…MRWD), and 813–920 (RKAH…KGKY). The Helicase C-terminal domain occupies 339–503 (NATDNFSKKR…DSPNYAEDVI (165 aa)). 2 stretches are compositionally biased toward basic and acidic residues: residues 351–361 (GPDGPTKKLKP) and 623–638 (REKI…DEKA). Residues 645 to 668 (AEEDNFDSPAEENDDNDDLEVTVT) are compositionally biased toward acidic residues. Composition is skewed to basic and acidic residues over residues 813–831 (RKAH…EREG), 851–878 (ERAP…KENR), and 885–903 (GSGK…DRKL). The segment covering 904-920 (QERRKAKNARPSKKGKY) has biased composition (basic residues).

The protein belongs to the DEAD box helicase family. DDX54/DBP10 subfamily.

Its subcellular location is the nucleus. The protein localises to the nucleolus. The catalysed reaction is ATP + H2O = ADP + phosphate + H(+). ATP-binding RNA helicase involved in the biogenesis of 60S ribosomal subunits and is required for the normal formation of 25S and 5.8S rRNAs. The sequence is that of ATP-dependent RNA helicase dbp10 (dbp10) from Sclerotinia sclerotiorum (strain ATCC 18683 / 1980 / Ss-1) (White mold).